A 400-amino-acid chain; its full sequence is CCA-adding enzyme (400 aa).

Positions 27 and 30 each coordinate ATP. CTP is bound by residues Gly27 and Arg30. Mg(2+) contacts are provided by Asp40 and Asp42. Arg111, Asp154, Arg157, Arg160, and Arg163 together coordinate ATP. CTP is bound by residues Arg111, Asp154, Arg157, Arg160, and Arg163.

It belongs to the tRNA nucleotidyltransferase/poly(A) polymerase family. Bacterial CCA-adding enzyme type 3 subfamily. As to quaternary structure, homodimer. Mg(2+) serves as cofactor.

It catalyses the reaction a tRNA precursor + 2 CTP + ATP = a tRNA with a 3' CCA end + 3 diphosphate. The catalysed reaction is a tRNA with a 3' CCA end + 2 CTP + ATP = a tRNA with a 3' CCACCA end + 3 diphosphate. Its function is as follows. Catalyzes the addition and repair of the essential 3'-terminal CCA sequence in tRNAs without using a nucleic acid template. Adds these three nucleotides in the order of C, C, and A to the tRNA nucleotide-73, using CTP and ATP as substrates and producing inorganic pyrophosphate. tRNA 3'-terminal CCA addition is required both for tRNA processing and repair. Also involved in tRNA surveillance by mediating tandem CCA addition to generate a CCACCA at the 3' terminus of unstable tRNAs. While stable tRNAs receive only 3'-terminal CCA, unstable tRNAs are marked with CCACCA and rapidly degraded. The polypeptide is CCA-adding enzyme (Bacillus pumilus (strain SAFR-032)).